We begin with the raw amino-acid sequence, 1050 residues long: DNA polymerase I A, chloroplastic/mitochondrial (1050 aa).

The N-terminal 91 residues, 1 to 91, are a transit peptide targeting the chloroplast and mitochondrion; the sequence is MAMGVSLTSH…VVFNGEWELR (91 aa). The segment at 202–240 is disordered; that stretch reads PRKGLDVGDNMDVNPKGEGIQRPLISDKSSGTANGNKNT. Polar residues predominate over residues 228–240; sequence DKSSGTANGNKNT. The 3'-5' exonuclease domain maps to 312-490; sequence ELICFSIYCG…LYESMTKKLQ (179 aa). Residues 673–694 form a disordered region; that stretch reads VVEDDDVETSETQKSKTDDETD. The interval 717 to 1048 is polymerase; it reads AIASLCEVCS…DAKCAQNWYA (332 aa).

It belongs to the DNA polymerase type-A family. Expressed in shoot apical meristem.

Its subcellular location is the plastid. The protein localises to the chloroplast. It localises to the mitochondrion. It carries out the reaction DNA(n) + a 2'-deoxyribonucleoside 5'-triphosphate = DNA(n+1) + diphosphate. Its activity is regulated as follows. Not inhibited by aphidicolin. Functionally, in addition to polymerase activity, this DNA polymerase exhibits 5'-3' exonuclease activity. Required for DNA replication and accumulation in plastids and mitochondria. May be required for DNA repair in both organelles. The chain is DNA polymerase I A, chloroplastic/mitochondrial (POLIA) from Arabidopsis thaliana (Mouse-ear cress).